The following is a 118-amino-acid chain: Basic phospholipase A2 nigroxin A (118 aa).

7 disulfide bridges follow: Cys-11/Cys-70, Cys-25/Cys-117, Cys-27/Cys-43, Cys-42/Cys-98, Cys-49/Cys-91, Cys-59/Cys-84, and Cys-77/Cys-89. Positions 26, 28, and 30 each coordinate Ca(2+). The active site involves His-46. Position 47 (Asp-47) interacts with Ca(2+). The active site involves Asp-92.

This sequence belongs to the phospholipase A2 family. Group I subfamily. D49 sub-subfamily. It depends on Ca(2+) as a cofactor. Expressed by the venom gland.

The protein resides in the secreted. It catalyses the reaction a 1,2-diacyl-sn-glycero-3-phosphocholine + H2O = a 1-acyl-sn-glycero-3-phosphocholine + a fatty acid + H(+). In terms of biological role, snake venom phospholipase A2 (PLA2) that has only a weak enzymatic activity. It has a myotoxic activity in vivo (dystrophic effect). PLA2 catalyzes the calcium-dependent hydrolysis of the 2-acyl groups in 3-sn-phosphoglycerides. This is Basic phospholipase A2 nigroxin A from Micrurus nigrocinctus (Central American coral snake).